Here is a 362-residue protein sequence, read N- to C-terminus: D-alanine--D-alanine ligase (362 aa).

An ATP-grasp domain is found at 134–345; sequence KILAQRAGVP…YPDLITRLIR (212 aa). 170-225 contributes to the ATP binding site; it reads GQLGTSNLFVKPSNQGSSVGITHVTDDSNYAEALAEAFKYDDKVLVEEGIVGTEVE. Residues D298, E312, and N314 each coordinate Mg(2+).

It belongs to the D-alanine--D-alanine ligase family. The cofactor is Mg(2+). Mn(2+) is required as a cofactor.

It is found in the cytoplasm. The enzyme catalyses 2 D-alanine + ATP = D-alanyl-D-alanine + ADP + phosphate + H(+). The protein operates within cell wall biogenesis; peptidoglycan biosynthesis. In terms of biological role, cell wall formation. This chain is D-alanine--D-alanine ligase, found in Lactobacillus delbrueckii subsp. bulgaricus (strain ATCC BAA-365 / Lb-18).